A 573-amino-acid polypeptide reads, in one-letter code: Cytosolic 5'-nucleotidase 1B (573 aa).

A compositionally biased stretch (basic residues) spans methionine 1–lysine 11. 2 disordered regions span residues methionine 1 to glutamate 200 and glutamate 218 to glutamate 238. The span at asparagine 12–glycine 35 shows a compositional bias: basic and acidic residues. Residues asparagine 60–alanine 73 show a composition bias toward polar residues. Residues serine 93–serine 105 are compositionally biased toward low complexity. Over residues threonine 115–glutamine 136 the composition is skewed to polar residues. Composition is skewed to basic and acidic residues over residues tryptophan 161–leucine 174 and aspartate 182–proline 194. Catalysis depends on aspartate 428, which acts as the Nucleophile.

Belongs to the 5'-nucleotidase type 3 family. The cofactor is Mg(2+). In terms of tissue distribution, expressed at highest levels in testis. Also expressed in brain, skeletal muscle, kidney and heart.

It is found in the cytoplasm. The catalysed reaction is a ribonucleoside 5'-phosphate + H2O = a ribonucleoside + phosphate. It catalyses the reaction AMP + H2O = adenosine + phosphate. Activated by ADP. Its function is as follows. Catalyzes the hydrolysis of nucleotide monophosphates, releasing inorganic phosphate and the corresponding nucleoside, AMP is the major substrate. The chain is Cytosolic 5'-nucleotidase 1B (Nt5c1b) from Mus musculus (Mouse).